A 298-amino-acid chain; its full sequence is Acetylglutamate kinase (298 aa).

Residues Gly73–Gly74, Arg95, and Asn188 contribute to the substrate site.

It belongs to the acetylglutamate kinase family. ArgB subfamily.

It is found in the cytoplasm. The enzyme catalyses N-acetyl-L-glutamate + ATP = N-acetyl-L-glutamyl 5-phosphate + ADP. Its pathway is amino-acid biosynthesis; L-arginine biosynthesis; N(2)-acetyl-L-ornithine from L-glutamate: step 2/4. In terms of biological role, catalyzes the ATP-dependent phosphorylation of N-acetyl-L-glutamate. The protein is Acetylglutamate kinase of Nostoc punctiforme (strain ATCC 29133 / PCC 73102).